The sequence spans 280 residues: Small ribosomal subunit protein uS3 (280 aa).

A KH type-2 domain is found at 38–106; sequence IRRLLSTGLE…QVQLNILEVR (69 aa). The tract at residues 215 to 280 is disordered; it reads AAAAPAGAER…PAAEPQSTES (66 aa). The span at 238–280 shows a compositional bias: low complexity; it reads SGASGTTATGTEAGRAAASADESTAAGQPAEAAPAAEPQSTES.

It belongs to the universal ribosomal protein uS3 family. As to quaternary structure, part of the 30S ribosomal subunit. Forms a tight complex with proteins S10 and S14.

Its function is as follows. Binds the lower part of the 30S subunit head. Binds mRNA in the 70S ribosome, positioning it for translation. The sequence is that of Small ribosomal subunit protein uS3 from Mycolicibacterium paratuberculosis (strain ATCC BAA-968 / K-10) (Mycobacterium paratuberculosis).